Here is a 554-residue protein sequence, read N- to C-terminus: Glucose-6-phosphate isomerase (554 aa).

Residue E358 is the Proton donor of the active site. Catalysis depends on residues H389 and K515. A compositionally biased stretch (polar residues) spans S527–D540. The tract at residues S527 to G554 is disordered. The span at R544 to G554 shows a compositional bias: basic residues.

It belongs to the GPI family.

It localises to the cytoplasm. The catalysed reaction is alpha-D-glucose 6-phosphate = beta-D-fructose 6-phosphate. Its pathway is carbohydrate biosynthesis; gluconeogenesis. It participates in carbohydrate degradation; glycolysis; D-glyceraldehyde 3-phosphate and glycerone phosphate from D-glucose: step 2/4. Catalyzes the reversible isomerization of glucose-6-phosphate to fructose-6-phosphate. This Mycobacterium ulcerans (strain Agy99) protein is Glucose-6-phosphate isomerase.